The sequence spans 150 residues: Large ribosomal subunit protein eL19 (150 aa).

Positions 59-89 (SRYRARIRHEQKKKGRHRGPGSRKGKKTARM) are disordered. Over residues 61-89 (YRARIRHEQKKKGRHRGPGSRKGKKTARM) the composition is skewed to basic residues.

This sequence belongs to the eukaryotic ribosomal protein eL19 family. As to quaternary structure, part of the 50S ribosomal subunit.

In terms of biological role, binds to the 23S rRNA. This chain is Large ribosomal subunit protein eL19, found in Pyrococcus horikoshii (strain ATCC 700860 / DSM 12428 / JCM 9974 / NBRC 100139 / OT-3).